A 117-amino-acid polypeptide reads, in one-letter code: MKDMKTIEGIIVVTTPEIPGYKVVEVKGVARGGTVRATHIGRDIMALLRNLKGGEVKEYTEMMAEAREEALRRMALHAKELGANAVVNFRFATSNLGGSMAEIYAYGTAVVVERVEK.

The protein belongs to the UPF0145 family.

This chain is UPF0145 protein PH1682, found in Pyrococcus horikoshii (strain ATCC 700860 / DSM 12428 / JCM 9974 / NBRC 100139 / OT-3).